A 570-amino-acid polypeptide reads, in one-letter code: Pre-mRNA 3'-end-processing factor FIP1 (570 aa).

A compositionally biased stretch (basic and acidic residues) spans 1-10 (MSAEEADKTT). A disordered region spans residues 1 to 107 (MSAEEADKTT…SDDDDDDVRV (107 aa)). Acidic residues predominate over residues 16–38 (AGDEEEEWLYGDEGESKETEEEE). Residues 56–77 (DAPTTTNNSSDSATPPTTTTTT) are compositionally biased toward low complexity. Residues 87-104 (APGEDEDSESDSDDDDDD) show a composition bias toward acidic residues. Thr-125 carries the post-translational modification Phosphothreonine. Ser-247 carries the post-translational modification Phosphoserine. Disordered regions lie at residues 300-328 (RRRHNLEGNNIQVISEHSSSEVEPEVQKM), 371-400 (PNFPPPTGGPPPSLIPTLDNSGHPGGYDGR), and 418-570 (GAVN…EAME). A compositionally biased stretch (pro residues) spans 371–384 (PNFPPPTGGPPPSL). 2 stretches are compositionally biased toward basic and acidic residues: residues 436–462 (YPRRDKEREKERERERQRDRGHERDHS) and 476–506 (DEERYRSYRDYGDRGYERHRERASREKEERH). Basic residues-rich tracts occupy residues 520–529 (KSSRSSSRRR) and 538–548 (HRRHKHKKSKR). Basic and acidic residues predominate over residues 549–562 (SKEGKEPSEERSAD).

Belongs to the FIP1 family.

The protein resides in the nucleus. In terms of biological role, involved in mRNA processing. The chain is Pre-mRNA 3'-end-processing factor FIP1 (fip1l1) from Danio rerio (Zebrafish).